Reading from the N-terminus, the 279-residue chain is Large ribosomal subunit protein uL2 (279 aa).

Disordered regions lie at residues 30–59 (EKSL…GGHK) and 225–279 (VMNP…KNKR). Basic residues predominate over residues 50–59 (TTRHKGGGHK). Residues 253 to 268 (PEGRTRRPNKESDKLI) are compositionally biased toward basic and acidic residues. Residues 269 to 279 (VRRRRTGKNKR) are compositionally biased toward basic residues.

The protein belongs to the universal ribosomal protein uL2 family. Part of the 50S ribosomal subunit. Forms a bridge to the 30S subunit in the 70S ribosome.

One of the primary rRNA binding proteins. Required for association of the 30S and 50S subunits to form the 70S ribosome, for tRNA binding and peptide bond formation. It has been suggested to have peptidyltransferase activity; this is somewhat controversial. Makes several contacts with the 16S rRNA in the 70S ribosome. This Kocuria rhizophila (strain ATCC 9341 / DSM 348 / NBRC 103217 / DC2201) protein is Large ribosomal subunit protein uL2.